A 394-amino-acid chain; its full sequence is Mannosyl-3-phosphoglycerate synthase (394 aa).

The protein belongs to the glycosyltransferase 2 family.

The protein resides in the cytoplasm. It carries out the reaction (2R)-3-phosphoglycerate + GDP-alpha-D-mannose = 2-O-(alpha-D-mannosyl)-3-phosphoglycerate + GDP + H(+). It participates in carbohydrate biosynthesis; 2-(alpha-D-mannosyl)-D-glycerate biosynthesis; 2-(alpha-D-mannosyl)-D-glycerate from GDP-alpha-D-mannose (MPG route): step 1/2. Functionally, transfers a mannosyl group from GDP-mannose to phosphoglycerate to form mannosyl-3-phosphoglycerate (MPG). The protein is Mannosyl-3-phosphoglycerate synthase (mngA) of Pyrococcus abyssi (strain GE5 / Orsay).